Consider the following 357-residue polypeptide: Protein MGF 360-14L (357 aa).

This sequence belongs to the asfivirus MGF 360 family. As to quaternary structure, interacts with host IRF3 and TRIM21; these interactions mediates degradation of IRF3 through TRIM21 and ubiquitin-meditated proteolysis.

Its subcellular location is the host cytoplasm. Functionally, plays a role in virus cell tropism, and may be required for efficient virus replication in macrophages. Also inhibits the host cGAS/STING-mediated type I interferon production by inducing host IRF3 degradation through the proteasome pathway. This Ornithodoros (relapsing fever ticks) protein is Protein MGF 360-14L.